The primary structure comprises 190 residues: Segregation and condensation protein B (190 aa).

This sequence belongs to the ScpB family. Homodimer. Homodimerization may be required to stabilize the binding of ScpA to the Smc head domains. Component of a cohesin-like complex composed of ScpA, ScpB and the Smc homodimer, in which ScpA and ScpB bind to the head domain of Smc. The presence of the three proteins is required for the association of the complex with DNA.

It localises to the cytoplasm. Functionally, participates in chromosomal partition during cell division. May act via the formation of a condensin-like complex containing Smc and ScpA that pull DNA away from mid-cell into both cell halves. The protein is Segregation and condensation protein B of Bacillus cereus (strain ZK / E33L).